A 391-amino-acid chain; its full sequence is MTRGICILGATGSIGKSTLDVVSRHPDQFRIVALTGNHRVAEMQLLCQQHHPELVVMAAPEAAQQLRVGLGDAGLKKIQVESGPEALAEAARMSGVDEVMAAIVGAAGLLPTLAAVEAGKKVYLANKECLVMAGNLFMERVRQHQVTLLPIDSEHNAVFQCFADGKGVRRILLTASGGPFRTWPAEHLAVVTPDQACAHPNWVMGRKISVDSATMMNKGLEVIEAHWLFDLPASRIDVMIHPQSIIHSMVEYVDGSVLAQLGNPDMRTPIAHALAFPERMESGVSSLDLAHGPDLQFEAPDLQRFPCLALAFDALQAGGAAATVLNAANEIAVQAFLEGHLPFLRIAAVVEDTLGELQPAAPDHLDDVLAIDQLAREVALRHLARHGSGMQ.

Residues Thr11, Gly12, Ser13, Ile14, and Asn126 each contribute to the NADPH site. Lys127 lines the 1-deoxy-D-xylulose 5-phosphate pocket. Glu128 contacts NADPH. Position 152 (Asp152) interacts with Mn(2+). Ser153, Glu154, Ser176, and His199 together coordinate 1-deoxy-D-xylulose 5-phosphate. Glu154 provides a ligand contact to Mn(2+). Gly205 serves as a coordination point for NADPH. 4 residues coordinate 1-deoxy-D-xylulose 5-phosphate: Ser212, Asn217, Lys218, and Glu221. A Mn(2+)-binding site is contributed by Glu221.

The protein belongs to the DXR family. Requires Mg(2+) as cofactor. The cofactor is Mn(2+).

It catalyses the reaction 2-C-methyl-D-erythritol 4-phosphate + NADP(+) = 1-deoxy-D-xylulose 5-phosphate + NADPH + H(+). It functions in the pathway isoprenoid biosynthesis; isopentenyl diphosphate biosynthesis via DXP pathway; isopentenyl diphosphate from 1-deoxy-D-xylulose 5-phosphate: step 1/6. Catalyzes the NADPH-dependent rearrangement and reduction of 1-deoxy-D-xylulose-5-phosphate (DXP) to 2-C-methyl-D-erythritol 4-phosphate (MEP). The polypeptide is 1-deoxy-D-xylulose 5-phosphate reductoisomerase (Acidithiobacillus ferrooxidans (strain ATCC 53993 / BNL-5-31) (Leptospirillum ferrooxidans (ATCC 53993))).